The following is a 165-amino-acid chain: Biosynthetic peptidoglycan transglycosylase (165 aa).

This sequence belongs to the glycosyltransferase 51 family.

It localises to the cell inner membrane. The enzyme catalyses [GlcNAc-(1-&gt;4)-Mur2Ac(oyl-L-Ala-gamma-D-Glu-L-Lys-D-Ala-D-Ala)](n)-di-trans,octa-cis-undecaprenyl diphosphate + beta-D-GlcNAc-(1-&gt;4)-Mur2Ac(oyl-L-Ala-gamma-D-Glu-L-Lys-D-Ala-D-Ala)-di-trans,octa-cis-undecaprenyl diphosphate = [GlcNAc-(1-&gt;4)-Mur2Ac(oyl-L-Ala-gamma-D-Glu-L-Lys-D-Ala-D-Ala)](n+1)-di-trans,octa-cis-undecaprenyl diphosphate + di-trans,octa-cis-undecaprenyl diphosphate + H(+). It functions in the pathway cell wall biogenesis; peptidoglycan biosynthesis. Peptidoglycan polymerase that catalyzes glycan chain elongation from lipid-linked precursors. This Neisseria meningitidis protein is Biosynthetic peptidoglycan transglycosylase.